The chain runs to 351 residues: Biotin synthase (351 aa).

The Radical SAM core domain occupies 48–265 (NKVRIHILDN…LCMFRLINPD (218 aa)). 3 residues coordinate [4Fe-4S] cluster: Cys-63, Cys-67, and Cys-70. Residues Cys-107, Cys-139, Cys-199, and Arg-269 each contribute to the [2Fe-2S] cluster site.

It belongs to the radical SAM superfamily. Biotin synthase family. In terms of assembly, homodimer. [4Fe-4S] cluster is required as a cofactor. The cofactor is [2Fe-2S] cluster.

It catalyses the reaction (4R,5S)-dethiobiotin + (sulfur carrier)-SH + 2 reduced [2Fe-2S]-[ferredoxin] + 2 S-adenosyl-L-methionine = (sulfur carrier)-H + biotin + 2 5'-deoxyadenosine + 2 L-methionine + 2 oxidized [2Fe-2S]-[ferredoxin]. The protein operates within cofactor biosynthesis; biotin biosynthesis; biotin from 7,8-diaminononanoate: step 2/2. Catalyzes the conversion of dethiobiotin (DTB) to biotin by the insertion of a sulfur atom into dethiobiotin via a radical-based mechanism. The sequence is that of Biotin synthase from Leptospira interrogans serogroup Icterohaemorrhagiae serovar Lai (strain 56601).